Consider the following 456-residue polypeptide: Equilibrative nucleoside transporter 2 (456 aa).

The Cytoplasmic segment spans residues methionine 1–histidine 12. Residues leucine 13 to tryptophan 29 traverse the membrane as a helical segment. The Extracellular segment spans residues asparagine 30–asparagine 68. N-linked (GlcNAc...) asparagine glycans are attached at residues asparagine 47 and asparagine 56. A helical transmembrane segment spans residues tryptophan 69–proline 93. Residues glutamate 94–arginine 97 lie on the Cytoplasmic side of the membrane. The chain crosses the membrane as a helical span at residues isoleucine 98–valine 116. The Extracellular portion of the chain corresponds to lysine 117–leucine 124. Residues phenylalanine 125–leucine 143 form a helical membrane-spanning segment. Residues glutamine 144–threonine 160 are Cytoplasmic-facing. Residues leucine 161–valine 185 form a helical membrane-spanning segment. Over aspartate 186 to leucine 192 the chain is Extracellular. The helical transmembrane segment at glycine 193–proline 213 threads the bilayer. Over histidine 214 to leucine 291 the chain is Cytoplasmic. At serine 251 the chain carries Phosphoserine. The helical transmembrane segment at threonine 292–threonine 311 threads the bilayer. The Extracellular portion of the chain corresponds to alanine 312–lysine 323. The helical transmembrane segment at tryptophan 324 to tryptophan 342 threads the bilayer. Residues leucine 343 to glutamine 359 lie on the Cytoplasmic side of the membrane. A helical transmembrane segment spans residues leucine 360 to cysteine 378. Topologically, residues histidine 379–aspartate 393 are extracellular. Residues alanine 394 to leucine 413 form a helical membrane-spanning segment. At threonine 414–glycine 431 the chain is on the cytoplasmic side. Residues alanine 432–phenylalanine 452 traverse the membrane as a helical segment. Residues lysine 453 to leucine 456 lie on the Extracellular side of the membrane.

It belongs to the SLC29A/ENT transporter (TC 2.A.57) family. In terms of tissue distribution, expressed in squeletal muscles. Expressed in testis at the blood-brain-barrier.

It is found in the apical cell membrane. Its subcellular location is the basolateral cell membrane. The catalysed reaction is uridine(out) = uridine(in). It catalyses the reaction inosine(in) = inosine(out). The enzyme catalyses adenosine(in) = adenosine(out). It carries out the reaction thymidine(in) = thymidine(out). The catalysed reaction is hypoxanthine(out) = hypoxanthine(in). It catalyses the reaction adenine(out) = adenine(in). The enzyme catalyses cytidine(in) = cytidine(out). It carries out the reaction thymine(out) = thymine(in). The catalysed reaction is uracil(in) = uracil(out). It catalyses the reaction guanine(out) = guanine(in). The enzyme catalyses guanosine(in) = guanosine(out). Bidirectional uniporter involved in the facilitative transport of nucleosides and nucleobases, and contributes to maintaining their cellular homeostasis. Functions as a Na(+)-independent, passive transporter. Involved in the transport of nucleosides such as inosine, adenosine, uridine, thymidine, cytidine and guanosine. Also able to transport purine nucleobases (hypoxanthine, adenine, guanine) and pyrimidine nucleobases (thymine, uracil). Involved in nucleoside transport at basolateral membrane of kidney cells, allowing liver absorption of nucleoside metabolites. Mediates apical nucleoside uptake into Sertoli cells, thereby regulating the transport of nucleosides in testis across the blood-testis-barrier. Mediates both the influx and efflux of hypoxanthine in skeletal muscle microvascular endothelial cells to control the amount of intracellular hypoxanthine available for xanthine oxidase-mediated ROS production. The polypeptide is Equilibrative nucleoside transporter 2 (Rattus norvegicus (Rat)).